The primary structure comprises 344 residues: Aspartate carbamoyltransferase catalytic subunit (344 aa).

Positions 1 to 30 (MPESPPLPKRSPLMTSSTTRPASDYPPGGD) are disordered. Residues Arg-88 and Thr-89 each contribute to the carbamoyl phosphate site. Lys-116 provides a ligand contact to L-aspartate. Carbamoyl phosphate is bound by residues Arg-138, His-166, and Gln-169. 2 residues coordinate L-aspartate: Arg-199 and Arg-253. The carbamoyl phosphate site is built by Gly-294 and Pro-295.

It belongs to the aspartate/ornithine carbamoyltransferase superfamily. ATCase family. Heterododecamer (2C3:3R2) of six catalytic PyrB chains organized as two trimers (C3), and six regulatory PyrI chains organized as three dimers (R2).

The enzyme catalyses carbamoyl phosphate + L-aspartate = N-carbamoyl-L-aspartate + phosphate + H(+). It participates in pyrimidine metabolism; UMP biosynthesis via de novo pathway; (S)-dihydroorotate from bicarbonate: step 2/3. In terms of biological role, catalyzes the condensation of carbamoyl phosphate and aspartate to form carbamoyl aspartate and inorganic phosphate, the committed step in the de novo pyrimidine nucleotide biosynthesis pathway. The polypeptide is Aspartate carbamoyltransferase catalytic subunit (Sphingopyxis alaskensis (strain DSM 13593 / LMG 18877 / RB2256) (Sphingomonas alaskensis)).